Consider the following 261-residue polypeptide: 5-oxoprolinase subunit A (261 aa).

Belongs to the LamB/PxpA family. In terms of assembly, forms a complex composed of PxpA, PxpB and PxpC.

The enzyme catalyses 5-oxo-L-proline + ATP + 2 H2O = L-glutamate + ADP + phosphate + H(+). Catalyzes the cleavage of 5-oxoproline to form L-glutamate coupled to the hydrolysis of ATP to ADP and inorganic phosphate. This chain is 5-oxoprolinase subunit A, found in Coprothermobacter proteolyticus (strain ATCC 35245 / DSM 5265 / OCM 4 / BT).